A 180-amino-acid chain; its full sequence is Peptidyl-tRNA hydrolase (180 aa).

Residue Y13 coordinates tRNA. H18 acts as the Proton acceptor in catalysis. The tRNA site is built by Y58, N60, and N100.

This sequence belongs to the PTH family. As to quaternary structure, monomer.

It localises to the cytoplasm. The enzyme catalyses an N-acyl-L-alpha-aminoacyl-tRNA + H2O = an N-acyl-L-amino acid + a tRNA + H(+). Hydrolyzes ribosome-free peptidyl-tRNAs (with 1 or more amino acids incorporated), which drop off the ribosome during protein synthesis, or as a result of ribosome stalling. Functionally, catalyzes the release of premature peptidyl moieties from peptidyl-tRNA molecules trapped in stalled 50S ribosomal subunits, and thus maintains levels of free tRNAs and 50S ribosomes. The chain is Peptidyl-tRNA hydrolase from Fervidobacterium nodosum (strain ATCC 35602 / DSM 5306 / Rt17-B1).